The sequence spans 624 residues: Probable Xaa-Pro aminopeptidase P (624 aa).

Asp414, Asp425, Glu530, and Glu544 together coordinate Mn(2+).

The protein belongs to the peptidase M24B family. Requires Mn(2+) as cofactor.

The catalysed reaction is Release of any N-terminal amino acid, including proline, that is linked to proline, even from a dipeptide or tripeptide.. Functionally, catalyzes the removal of a penultimate prolyl residue from the N-termini of peptides. The sequence is that of Probable Xaa-Pro aminopeptidase P (AMPP) from Chaetomium globosum (strain ATCC 6205 / CBS 148.51 / DSM 1962 / NBRC 6347 / NRRL 1970) (Soil fungus).